An 88-amino-acid chain; its full sequence is ATP synthase F(0) complex subunit f, mitochondrial (88 aa).

Alanine 2 bears the N-acetylalanine mark. Serine 3 is modified (phosphoserine). N6-acetyllysine is present on lysine 16. A helical transmembrane segment spans residues 62–79 (MVLAAYVVFSYCISYKEL).

Belongs to the ATPase F chain family. In terms of assembly, component of the ATP synthase complex composed at least of ATP5F1A/subunit alpha, ATP5F1B/subunit beta, ATP5MC1/subunit c (homooctomer), MT-ATP6/subunit a, MT-ATP8/subunit 8, ATP5ME/subunit e, ATP5MF/subunit f, ATP5MG/subunit g, ATP5MK/subunit k, ATP5MJ/subunit j, ATP5F1C/subunit gamma, ATP5F1D/subunit delta, ATP5F1E/subunit epsilon, ATP5PF/subunit F6, ATP5PB/subunit b, ATP5PD/subunit d, ATP5PO/subunit OSCP. ATP synthase complex consists of a soluble F(1) head domain (subunits alpha(3) and beta(3)) - the catalytic core - and a membrane F(0) domain - the membrane proton channel (subunits c, a, 8, e, f, g, k and j). These two domains are linked by a central stalk (subunits gamma, delta, and epsilon) rotating inside the F1 region and a stationary peripheral stalk (subunits F6, b, d, and OSCP).

Its subcellular location is the mitochondrion. It is found in the mitochondrion inner membrane. Subunit f, of the mitochondrial membrane ATP synthase complex (F(1)F(0) ATP synthase or Complex V) that produces ATP from ADP in the presence of a proton gradient across the membrane which is generated by electron transport complexes of the respiratory chain. ATP synthase complex consist of a soluble F(1) head domain - the catalytic core - and a membrane F(1) domain - the membrane proton channel. These two domains are linked by a central stalk rotating inside the F(1) region and a stationary peripheral stalk. During catalysis, ATP synthesis in the catalytic domain of F(1) is coupled via a rotary mechanism of the central stalk subunits to proton translocation. In vivo, can only synthesize ATP although its ATP hydrolase activity can be activated artificially in vitro. Part of the complex F(0) domain. The polypeptide is ATP synthase F(0) complex subunit f, mitochondrial (Rattus norvegicus (Rat)).